Here is a 371-residue protein sequence, read N- to C-terminus: Phosphate acyltransferase (371 aa).

It belongs to the PlsX family. In terms of assembly, homodimer. Probably interacts with PlsY.

The protein localises to the cytoplasm. The catalysed reaction is a fatty acyl-[ACP] + phosphate = an acyl phosphate + holo-[ACP]. It participates in lipid metabolism; phospholipid metabolism. Functionally, catalyzes the reversible formation of acyl-phosphate (acyl-PO(4)) from acyl-[acyl-carrier-protein] (acyl-ACP). This enzyme utilizes acyl-ACP as fatty acyl donor, but not acyl-CoA. This is Phosphate acyltransferase from Ruegeria pomeroyi (strain ATCC 700808 / DSM 15171 / DSS-3) (Silicibacter pomeroyi).